Consider the following 358-residue polypeptide: Fructose-bisphosphate aldolase 5, cytosolic (358 aa).

An N-acetylserine modification is found at Ser2. Arg39 is a binding site for substrate. Cys68 is modified (S-glutathionyl cysteine; transient). At Cys173 the chain carries S-glutathionyl cysteine; transient; alternate. Cys173 bears the S-nitrosocysteine; transient; alternate mark. Catalysis depends on Glu183, which acts as the Proton acceptor. The active-site Schiff-base intermediate with dihydroxyacetone-P is Lys225. Substrate-binding positions include 266 to 268 (SGG) and Arg298. At Ser350 the chain carries Phosphoserine.

This sequence belongs to the class I fructose-bisphosphate aldolase family. As to quaternary structure, homotetramer. Interacts with TRX3. Post-translationally, S-glutathionylated at Cys-68 and Cys-173. In terms of processing, S-nitrosylated at Cys-173. As to expression, expressed in rosette leaves and cauline leaves.

It is found in the cytoplasm. Its subcellular location is the cytosol. It catalyses the reaction beta-D-fructose 1,6-bisphosphate = D-glyceraldehyde 3-phosphate + dihydroxyacetone phosphate. It participates in carbohydrate degradation; glycolysis; D-glyceraldehyde 3-phosphate and glycerone phosphate from D-glucose: step 4/4. Fructose-bisphosphate aldolase that plays a key role in glycolysis and gluconeogenesis. This chain is Fructose-bisphosphate aldolase 5, cytosolic, found in Arabidopsis thaliana (Mouse-ear cress).